An 809-amino-acid polypeptide reads, in one-letter code: Glycerol-3-phosphate acyltransferase (809 aa).

Residues H309 to D314 carry the HXXXXD motif motif.

Belongs to the GPAT/DAPAT family.

It localises to the cell inner membrane. The enzyme catalyses sn-glycerol 3-phosphate + an acyl-CoA = a 1-acyl-sn-glycero-3-phosphate + CoA. It participates in phospholipid metabolism; CDP-diacylglycerol biosynthesis; CDP-diacylglycerol from sn-glycerol 3-phosphate: step 1/3. This chain is Glycerol-3-phosphate acyltransferase, found in Shewanella oneidensis (strain ATCC 700550 / JCM 31522 / CIP 106686 / LMG 19005 / NCIMB 14063 / MR-1).